The chain runs to 412 residues: Probable tRNA pseudouridine synthase D (412 aa).

Catalysis depends on Asp97, which acts as the Nucleophile. Positions 167-370 (ALPNYYGYQR…YGGYRKVVLT (204 aa)) constitute a TRUD domain.

Belongs to the pseudouridine synthase TruD family.

It catalyses the reaction uridine(13) in tRNA = pseudouridine(13) in tRNA. In terms of biological role, could be responsible for synthesis of pseudouridine from uracil-13 in transfer RNAs. The polypeptide is Probable tRNA pseudouridine synthase D (Pyrobaculum islandicum (strain DSM 4184 / JCM 9189 / GEO3)).